The following is a 155-amino-acid chain: 17.4 kDa class III heat shock protein (155 aa).

The 121-residue stretch at 35–155 (GRGSSNNIPI…KPKTVQIAVS (121 aa)) folds into the sHSP domain.

It belongs to the small heat shock protein (HSP20) family. As to quaternary structure, may form oligomeric structures.

The protein localises to the cytoplasm. This chain is 17.4 kDa class III heat shock protein (HSP17.4B), found in Arabidopsis thaliana (Mouse-ear cress).